A 374-amino-acid chain; its full sequence is Protein dip1 (374 aa).

The protein belongs to the LDB17 family.

The protein resides in the cytoplasm. It is found in the nucleus. Its subcellular location is the cell tip. Functionally, may be involved in protein-linked oligosaccharide phosphorylation. The polypeptide is Protein dip1 (dip1) (Schizosaccharomyces pombe (strain 972 / ATCC 24843) (Fission yeast)).